We begin with the raw amino-acid sequence, 61 residues long: Small ribosomal subunit protein uS14 (61 aa).

Zn(2+)-binding residues include cysteine 24, cysteine 27, cysteine 40, and cysteine 43.

Belongs to the universal ribosomal protein uS14 family. Zinc-binding uS14 subfamily. As to quaternary structure, part of the 30S ribosomal subunit. Contacts proteins S3 and S10. Requires Zn(2+) as cofactor.

Its function is as follows. Binds 16S rRNA, required for the assembly of 30S particles and may also be responsible for determining the conformation of the 16S rRNA at the A site. The protein is Small ribosomal subunit protein uS14 of Thermodesulfovibrio yellowstonii (strain ATCC 51303 / DSM 11347 / YP87).